The chain runs to 166 residues: 6,7-dimethyl-8-ribityllumazine synthase (166 aa).

Residues Phe-24, 58 to 60 (ALE), and 82 to 84 (AVI) each bind 5-amino-6-(D-ribitylamino)uracil. 87–88 (ET) serves as a coordination point for (2S)-2-hydroxy-3-oxobutyl phosphate. His-90 (proton donor) is an active-site residue. Asn-115 provides a ligand contact to 5-amino-6-(D-ribitylamino)uracil. Residue Arg-129 participates in (2S)-2-hydroxy-3-oxobutyl phosphate binding.

Belongs to the DMRL synthase family.

The catalysed reaction is (2S)-2-hydroxy-3-oxobutyl phosphate + 5-amino-6-(D-ribitylamino)uracil = 6,7-dimethyl-8-(1-D-ribityl)lumazine + phosphate + 2 H2O + H(+). The protein operates within cofactor biosynthesis; riboflavin biosynthesis; riboflavin from 2-hydroxy-3-oxobutyl phosphate and 5-amino-6-(D-ribitylamino)uracil: step 1/2. Its function is as follows. Catalyzes the formation of 6,7-dimethyl-8-ribityllumazine by condensation of 5-amino-6-(D-ribitylamino)uracil with 3,4-dihydroxy-2-butanone 4-phosphate. This is the penultimate step in the biosynthesis of riboflavin. The polypeptide is 6,7-dimethyl-8-ribityllumazine synthase (Ralstonia pickettii (strain 12J)).